Reading from the N-terminus, the 378-residue chain is uncharacterized protein (378 aa).

This is an uncharacterized protein from Nostoc sp. (strain PCC 7120 / SAG 25.82 / UTEX 2576).